Consider the following 86-residue polypeptide: Putative membrane protein insertion efficiency factor (86 aa).

The disordered stretch occupies residues 67-86 (LHEGGDDPVPPVKNNDNREH).

Belongs to the UPF0161 family.

It localises to the cell inner membrane. Could be involved in insertion of integral membrane proteins into the membrane. The chain is Putative membrane protein insertion efficiency factor from Photorhabdus laumondii subsp. laumondii (strain DSM 15139 / CIP 105565 / TT01) (Photorhabdus luminescens subsp. laumondii).